We begin with the raw amino-acid sequence, 332 residues long: Ribosomal RNA small subunit methyltransferase H (332 aa).

S-adenosyl-L-methionine is bound by residues glycine 37–tyrosine 39, aspartate 55, phenylalanine 82, aspartate 103, and glutamine 110. A disordered region spans residues threonine 281 to arginine 332.

This sequence belongs to the methyltransferase superfamily. RsmH family.

The protein resides in the cytoplasm. It carries out the reaction cytidine(1402) in 16S rRNA + S-adenosyl-L-methionine = N(4)-methylcytidine(1402) in 16S rRNA + S-adenosyl-L-homocysteine + H(+). Specifically methylates the N4 position of cytidine in position 1402 (C1402) of 16S rRNA. The polypeptide is Ribosomal RNA small subunit methyltransferase H (Rhodopseudomonas palustris (strain BisA53)).